Reading from the N-terminus, the 306-residue chain is Phenylcoumaran benzylic ether reductase IRL1 (306 aa).

NADP(+) is bound by residues 10–16 (GATGYIG), Arg35, and Lys44. Catalysis depends on Lys132, which acts as the Proton acceptor. Arg136 serves as a coordination point for NADP(+).

It belongs to the NmrA-type oxidoreductase family. Isoflavone reductase subfamily. In terms of tissue distribution, highly expressed in sclerotesta. Expressed in roots, and two-to-four year stems.

It carries out the reaction (-)-dehydrodiconiferyl alcohol + NADPH + H(+) = (S)-isodihydrodehydrodiconiferyl alcohol + NADP(+). It catalyses the reaction (+)-dehydrodiconiferyl alcohol + NADPH + H(+) = (R)-isodihydrodehydrodiconiferyl alcohol + NADP(+). The enzyme catalyses (2R,3S)-dihydrodehydrodiconiferyl alcohol + NADPH + H(+) = (S)-tetrahydrodehydrodiconiferyl alcohol + NADP(+). The catalysed reaction is (2S,3R)-dihydrodehydrodiconiferyl alcohol + NADPH + H(+) = (R)-tetrahydrodehydrodiconiferyl alcohol + NADP(+). Functionally, oxidoreductase involved in lignan biosynthesis. Catalyzes the NADPH-dependent reduction of phenylcoumaran benzylic ethers. Converts dehydrodiconiferyl alcohol (DDC) to isodihydrodehydrodiconiferyl alcohol (IDDDC), and dihydrodehydrodiconiferyl alcohol (DDDC) to tetrahydrodehydrodiconiferyl alcohol (TDDC). May regulate changes in lignin content and accumulation of flavonoids. The chain is Phenylcoumaran benzylic ether reductase IRL1 from Ginkgo biloba (Ginkgo).